We begin with the raw amino-acid sequence, 255 residues long: Alpha-acetolactate decarboxylase (255 aa).

The protein belongs to the alpha-acetolactate decarboxylase family.

The catalysed reaction is (2S)-2-acetolactate + H(+) = (R)-acetoin + CO2. Its pathway is polyol metabolism; (R,R)-butane-2,3-diol biosynthesis; (R,R)-butane-2,3-diol from pyruvate: step 2/3. In terms of biological role, converts acetolactate into acetoin, which can be excreted by the cells. This may be a mechanism for controlling the internal pH of cells in the stationary stage. This is Alpha-acetolactate decarboxylase (alsD) from Bacillus subtilis (strain 168).